Reading from the N-terminus, the 375-residue chain is Ribosomal RNA large subunit methyltransferase G (375 aa).

It belongs to the methyltransferase superfamily. RlmG family.

The protein localises to the cytoplasm. It carries out the reaction guanosine(1835) in 23S rRNA + S-adenosyl-L-methionine = N(2)-methylguanosine(1835) in 23S rRNA + S-adenosyl-L-homocysteine + H(+). Functionally, specifically methylates the guanine in position 1835 (m2G1835) of 23S rRNA. In Stutzerimonas stutzeri (strain A1501) (Pseudomonas stutzeri), this protein is Ribosomal RNA large subunit methyltransferase G.